Reading from the N-terminus, the 631-residue chain is Phosphomethylpyrimidine synthase (631 aa).

Substrate contacts are provided by residues Asn-239, Met-268, Tyr-297, His-333, 353-355, 394-397, and Glu-433; these read SRG and DGLR. Zn(2+) is bound at residue His-437. Residue Tyr-460 coordinates substrate. Position 501 (His-501) interacts with Zn(2+). Residues Cys-581, Cys-584, and Cys-589 each contribute to the [4Fe-4S] cluster site.

The protein belongs to the ThiC family. Homodimer. The cofactor is [4Fe-4S] cluster.

It carries out the reaction 5-amino-1-(5-phospho-beta-D-ribosyl)imidazole + S-adenosyl-L-methionine = 4-amino-2-methyl-5-(phosphooxymethyl)pyrimidine + CO + 5'-deoxyadenosine + formate + L-methionine + 3 H(+). It participates in cofactor biosynthesis; thiamine diphosphate biosynthesis. Its function is as follows. Catalyzes the synthesis of the hydroxymethylpyrimidine phosphate (HMP-P) moiety of thiamine from aminoimidazole ribotide (AIR) in a radical S-adenosyl-L-methionine (SAM)-dependent reaction. The polypeptide is Phosphomethylpyrimidine synthase (Salmonella dublin (strain CT_02021853)).